A 547-amino-acid polypeptide reads, in one-letter code: uncharacterized protein (547 aa).

The interval 1-37 (MSAASSAIPKRSDPRLLDQKKSAKSTLPKNTPENGVS) is disordered. A compositionally biased stretch (basic and acidic residues) spans 10-21 (KRSDPRLLDQKK). A compositionally biased stretch (polar residues) spans 24–37 (KSTLPKNTPENGVS). 2 C3H1-type zinc fingers span residues 41-67 (NLQH…SHSL) and 68-95 (ETER…HALP). Residues 132-176 (SPSLSSKTMKNPADKANNTTATDVRGNTATSPYFPFSRSPGRHSG) form a disordered region. Residues 147–162 (ANNTTATDVRGNTATS) show a composition bias toward polar residues. Residue Ser-343 is modified to Phosphoserine. A Phosphotyrosine modification is found at Tyr-344. Residues Ser-353, Ser-355, Ser-483, Ser-489, Ser-495, and Ser-499 each carry the phosphoserine modification. A Phosphothreonine modification is found at Thr-502. Over residues 526–536 (VANSSPPWNST) the composition is skewed to polar residues. Residues 526-547 (VANSSPPWNSTVEEETPFQMDD) are disordered. Acidic residues predominate over residues 537-547 (VEEETPFQMDD).

This is an uncharacterized protein from Schizosaccharomyces pombe (strain 972 / ATCC 24843) (Fission yeast).